The primary structure comprises 459 residues: Argininosuccinate lyase (459 aa).

The protein belongs to the lyase 1 family. Argininosuccinate lyase subfamily.

The protein resides in the cytoplasm. It catalyses the reaction 2-(N(omega)-L-arginino)succinate = fumarate + L-arginine. It participates in amino-acid biosynthesis; L-arginine biosynthesis; L-arginine from L-ornithine and carbamoyl phosphate: step 3/3. The protein is Argininosuccinate lyase of Geobacillus thermodenitrificans (strain NG80-2).